The primary structure comprises 1273 residues: DNA-directed RNA polymerase subunit beta (1273 aa).

Residues 1252–1273 are disordered; that stretch reads ADDQDLVVSSNDEEVSENDERS.

The protein belongs to the RNA polymerase beta chain family. As to quaternary structure, the RNAP catalytic core consists of 2 alpha, 1 beta, 1 beta' and 1 omega subunit. When a sigma factor is associated with the core the holoenzyme is formed, which can initiate transcription.

The catalysed reaction is RNA(n) + a ribonucleoside 5'-triphosphate = RNA(n+1) + diphosphate. Functionally, DNA-dependent RNA polymerase catalyzes the transcription of DNA into RNA using the four ribonucleoside triphosphates as substrates. The chain is DNA-directed RNA polymerase subunit beta from Dehalococcoides mccartyi (strain ATCC BAA-2100 / JCM 16839 / KCTC 5957 / BAV1).